Reading from the N-terminus, the 2193-residue chain is Genome polyprotein (2193 aa).

Residues 1 to 22 (MGSQVSTQRSGSHENSNSATEG) are disordered. Gly-2 carries N-myristoyl glycine; by host lipidation. The Cytoplasmic segment spans residues 2–1503 (GSQVSTQRSG…HLNRAVLVMQ (1502 aa)). 2 amphipathic alpha-helix regions span residues 566-588 (GDRVADVIESSIGDSVSKALTPA) and 568-588 (RVADVIESSIGDSVSKALTPA). Catalysis depends on for protease 2A activity residues His-883 and Asp-901. Positions 918 and 920 each coordinate Zn(2+). The active-site For protease 2A activity is Cys-972. 2 residues coordinate Zn(2+): Cys-978 and His-980. Residues 1112–1184 (SASWLKKFND…EQSAASQEDL (73 aa)) are membrane-binding. Residues 1112 to 1250 (SASWLKKFND…SPGTGKSLAT (139 aa)) are oligomerization. The tract at residues 1133-1137 (FNKIS) is RNA-binding. The SF3 helicase domain occupies 1216–1374 (EKRMNNYMQF…YKTDLGRLDA (159 aa)). Position 1240 to 1247 (1240 to 1247 (GSPGTGKS)) interacts with ATP. Residues Cys-1381, Cys-1392, and Cys-1397 each coordinate Zn(2+). Residues 1381–1397 (CTENNTANFKRCSPLVC) form a C4-type; degenerate zinc finger. The tract at residues 1424-1431 (EYNNRSAI) is RNA-binding. Positions 1435 to 1440 (IEALFQ) are oligomerization. An intramembrane segment occupies 1504-1519 (SIATVVAVVSLVYVIY). Over 1520–2193 (KLFAGFQGAY…NLRRNWLELF (674 aa)) the chain is Cytoplasmic. O-(5'-phospho-RNA)-tyrosine is present on Tyr-1529. In terms of domain architecture, Peptidase C3 spans 1549 to 1727 (GPSLDFALSL…FCAGLKRSYF (179 aa)). Residues His-1588, Glu-1619, and Cys-1695 each act as for protease 3C activity in the active site. In terms of domain architecture, RdRp catalytic spans 1958-2073 (GSLFAFDYSG…ASYPFPIDCL (116 aa)). Residues Asp-1964 and Asp-2060 each contribute to the Mg(2+) site.

It belongs to the picornaviruses polyprotein family. As to quaternary structure, interacts with capsid protein VP1 and capsid protein VP3 to form heterotrimeric protomers. Interacts with capsid protein VP0, and capsid protein VP3 to form heterotrimeric protomers. Five protomers subsequently associate to form pentamers which serve as building blocks for the capsid. Interacts with capsid protein VP2, capsid protein VP3 and capsid protein VP4 following cleavage of capsid protein VP0. Interacts with host SCARB2. Interacts with host ARF6; this interaction mediates viral endocytosis. In terms of assembly, interacts with capsid protein VP1 and capsid protein VP3 in the mature capsid. Interacts with host SCARB2. As to quaternary structure, interacts with capsid protein VP0 and capsid protein VP1 to form heterotrimeric protomers. Five protomers subsequently associate to form pentamers which serve as building blocks for the capsid. Interacts with capsid protein VP4 in the mature capsid. Interacts with protein 2C; this interaction may be important for virion morphogenesis. Interacts with capsid protein VP1 and capsid protein VP3. In terms of assembly, homodimer. Interacts with host SPOP; this interaction promotes protease 2A ubiquitination and subsequent degradation. As to quaternary structure, interacts with host BAX; this interaction activates the mitochondrial apoptotic pathway. Interacts with host ILF2. Homohexamer; forms a hexameric ring structure with 6-fold symmetry characteristic of AAA+ ATPases. Interacts (via N-terminus) with host RTN3 (via reticulon domain); this interaction is important for viral replication. Interacts with capsid protein VP3; this interaction may be important for virion morphogenesis. In terms of assembly, interacts with protein 3CD. As to quaternary structure, homodimer. Interacts with host GBF1. Interacts (via GOLD domain) with host ACBD3 (via GOLD domain); this interaction allows the formation of a viral protein 3A/ACBD3 heterotetramer with a 2:2 stoichiometry, which will stimulate the recruitment of host PI4KB in order to synthesize PI4P at the viral RNA replication sites. Interacts with RNA-directed RNA polymerase. In terms of assembly, interacts with host IFIH1/MDA5; this interaction inhibits host IFIH1. Interacts with host RIGI. As to quaternary structure, interacts with protein 3AB and with RNA-directed RNA polymerase. Interacts with host PPP1R15A. Interacts with Viral protein genome-linked and with protein 3CD. Interacts with host NLRP3. It depends on Mg(2+) as a cofactor. Specific enzymatic cleavages in vivo by the viral proteases yield processing intermediates and the mature proteins. In terms of processing, myristoylation is required for the formation of pentamers during virus assembly. Further assembly of 12 pentamers and a molecule of genomic RNA generates the provirion. Post-translationally, during virion maturation, immature virions are rendered infectious following cleavage of VP0 into VP4 and VP2. This maturation seems to be an autocatalytic event triggered by the presence of RNA in the capsid and it is followed by a conformational change infectious virion. Myristoylation is required during RNA encapsidation and formation of the mature virus particle. In terms of processing, VPg is uridylylated by the polymerase into VPg-pUpU. This acts as a nucleotide-peptide primer for the genomic RNA replication.

The protein localises to the virion. The protein resides in the host cytoplasm. Its subcellular location is the host cytoplasmic vesicle membrane. It localises to the host nucleus. It carries out the reaction a ribonucleoside 5'-triphosphate + H2O = a ribonucleoside 5'-diphosphate + phosphate + H(+). It catalyses the reaction Selective cleavage of Tyr-|-Gly bond in the picornavirus polyprotein.. The enzyme catalyses RNA(n) + a ribonucleoside 5'-triphosphate = RNA(n+1) + diphosphate. The catalysed reaction is Selective cleavage of Gln-|-Gly bond in the poliovirus polyprotein. In other picornavirus reactions Glu may be substituted for Gln, and Ser or Thr for Gly.. Replication or transcription is subject to high level of random mutations by the nucleotide analog ribavirin. Forms an icosahedral capsid of pseudo T=3 symmetry with capsid proteins VP2 and VP3. The capsid is 300 Angstroms in diameter, composed of 60 copies of each capsid protein and enclosing the viral positive strand RNA genome. Capsid protein VP1 mainly forms the vertices of the capsid. Capsid protein VP1, together with VP2, interacts with host cell receptor SCARB2 to provide virion attachment to target host cells. This attachment induces virion internalization predominantly through clathrin-dependent endocytosis. After binding to its receptor, the capsid undergoes conformational changes. Capsid protein VP1 N-terminus (that contains an amphipathic alpha-helix) and capsid protein VP4 are externalized. Together, they shape a pore in the host membrane through which viral genome is translocated to host cell cytoplasm. Its function is as follows. Forms an icosahedral capsid of pseudo T=3 symmetry with capsid proteins VP2 and VP3. The capsid is 300 Angstroms in diameter, composed of 60 copies of each capsid protein and enclosing the viral positive strand RNA genome. Capsid protein VP2, together with VP1, interacts with host cell receptor SCARB2 to provide virion attachment to target host cells. Functionally, forms an icosahedral capsid of pseudo T=3 symmetry with capsid proteins VP2 and VP3. The capsid is 300 Angstroms in diameter, composed of 60 copies of each capsid protein and enclosing the viral positive strand RNA genome. In terms of biological role, lies on the inner surface of the capsid shell. After binding to the host receptor, the capsid undergoes conformational changes. Capsid protein VP4 is released, Capsid protein VP1 N-terminus is externalized, and together, they shape a pore in the host membrane through which the viral genome is translocated into the host cell cytoplasm. Component of immature procapsids, which is cleaved into capsid proteins VP4 and VP2 after maturation. Allows the capsid to remain inactive before the maturation step. Its function is as follows. Cysteine protease that cleaves viral polyprotein and specific host proteins. It is responsible for the autocatalytic cleavage between the P1 and P2 regions, which is the first cleavage occurring in the polyprotein. Also cleaves the host translation initiation factor EIF4G1, in order to shut down the capped cellular mRNA translation. Inhibits the host nucleus-cytoplasm protein and RNA trafficking by cleaving host members of the nuclear pores. Counteracts stress granule formation probably by antagonizing its assembly or promoting its dissassembly. Cleaves and inhibits host IFIH1/MDA5, thereby inhibiting the type-I IFN production and the establishment of the antiviral state. Cleaves and inhibits host MAVS, thereby inhibiting the type-I IFN production and the establishment of the antiviral state. Functionally, plays an essential role in the virus replication cycle by acting as a viroporin. Creates a pore in the host endoplasmic reticulum and as a consequence releases Ca2+ in the cytoplasm of infected cell. In turn, high levels of cytoplasmic calcium may trigger membrane trafficking and transport of viral ER-associated proteins to viroplasms, sites of viral genome replication. Also activates the mitochondrial apoptotic pathway by activating host BAX. In terms of biological role, induces and associates with structural rearrangements of intracellular membranes. Displays RNA-binding, nucleotide binding and NTPase activities. May play a role in virion morphogenesis and viral RNA encapsidation by interacting with the capsid protein VP3. Localizes the viral replication complex to the surface of membranous vesicles. Together with protein 3CD binds the Cis-Active RNA Element (CRE) which is involved in RNA synthesis initiation. Acts as a cofactor to stimulate the activity of 3D polymerase, maybe through a nucleid acid chaperone activity. Its function is as follows. Localizes the viral replication complex to the surface of membranous vesicles. It inhibits host cell endoplasmic reticulum-to-Golgi apparatus transport and causes the disassembly of the Golgi complex, possibly through GBF1 interaction. This would result in depletion of MHC, trail receptors and IFN receptors at the host cell surface. Plays an essential role in viral RNA replication by recruiting ACBD3 and PI4KB at the viral replication sites, thereby allowing the formation of the rearranged membranous structures where viral replication takes place. Functionally, acts as a primer for viral RNA replication and remains covalently bound to viral genomic RNA. VPg is uridylylated prior to priming replication into VPg-pUpU. The oriI viral genomic sequence may act as a template for this. The VPg-pUpU is then used as primer on the genomic RNA poly(A) by the RNA-dependent RNA polymerase to replicate the viral genome. During genome replication, the VPg-RNA linkage is removed by the host TDP2, thereby accelerating replication. During the late stage of the replication cycle, host TDP2 is excluded from sites of viral RNA synthesis and encapsidation, allowing for the generation of progeny virions. In terms of biological role, involved in the viral replication complex and viral polypeptide maturation. It exhibits protease activity with a specificity and catalytic efficiency that is different from protease 3C. Protein 3CD lacks polymerase activity. Protein 3CD binds to the 5'UTR of the viral genome. Regulates host protein expression by interacting with host PPP1R15A to support viral replication. Major viral protease that mediates proteolytic processing of the polyprotein. Cleaves host EIF5B, contributing to host translation shutoff. Also cleaves host PABPC1, contributing to host translation shutoff. Disassembles host cytoplasmic stress granules by cleaving host G3BP1, although this effect is less prononced than the inhibition induced by protease 2A. Cleaves host RIGI and thus contributes to the inhibition of type I interferon production. Cleaves host IRF7 and thus contributes to the inhibition of type I interferon production. Cleaves host HNRNPA1 thereby increasing the translation of apoptosis protease activating factor APAF1, leading to apoptosis of the host cell. Cleaves host NLRP1, triggers host N-glycine-mediated degradation of the autoinhibitory NLRP1 N-terminal fragment. Cleaves and inactivates host GSDMD, preventing GSDMD-mediated pyroptosis. Also promotes apoptosis in infected cell through cleaving of host PINX1, a telomere binding protein in order to facilitate viral release. Impairs host PML-NBs production via PML cleavage and counter its antiviral activities. Its function is as follows. Replicates the viral genomic RNA on the surface of intracellular membranes. May form linear arrays of subunits that propagate along a strong head-to-tail interaction called interface-I. Covalently attaches UMP to a tyrosine of VPg, which is used to prime RNA synthesis. The positive stranded RNA genome is first replicated at virus induced membranous vesicles, creating a dsRNA genomic replication form. This dsRNA is then used as template to synthesize positive stranded RNA genomes. ss(+)RNA genomes are either translated, replicated or encapsidated. Facilitates the assembly of NLRP3 inflammasome complex and stimulates the cleavage of host pro-CASP1 and the secretion of IL-1beta. This is Genome polyprotein from Human enterovirus 71 (strain USA/BrCr/1970) (EV71).